We begin with the raw amino-acid sequence, 211 residues long: Urease accessory protein UreG (211 aa).

GTP is bound at residue 11–18; it reads GPVGSGKT.

Belongs to the SIMIBI class G3E GTPase family. UreG subfamily. Homodimer. UreD, UreF and UreG form a complex that acts as a GTP-hydrolysis-dependent molecular chaperone, activating the urease apoprotein by helping to assemble the nickel containing metallocenter of UreC. The UreE protein probably delivers the nickel.

The protein resides in the cytoplasm. In terms of biological role, facilitates the functional incorporation of the urease nickel metallocenter. This process requires GTP hydrolysis, probably effectuated by UreG. The protein is Urease accessory protein UreG of Laribacter hongkongensis (strain HLHK9).